Reading from the N-terminus, the 371-residue chain is MKNVGFIGWRGMVGSVLMDRMSQENDFENLNPVFFTTSQAGQKAPVFGGKDAGDLKSAFDIEELKKLDIIVTCQGGDYTNEVYPKLKATGWDGYWVDAASALRMKDDAIIVLDPVNQHVISEGLKKGIKTFVGGNCTVSLMLMAIGGLFEKDLVEWISVATYQAASGAGAKNMRELLSQMGLLEQAVSSELKDPASSILDIERKVTAKMRADNFPTDNFGAALGGSLIPWIDKLLPETGQTKEEWKGYAETNKILGLSDNPIPVDGLCVRIGALRCHSQAFTIKLKKDLPLEEIEQIIASHNEWVKVIPNDKEITLRELTPAKVTGTLSVPVGRLRKLAMGPEYLAAFTVGDQLLWGAAEPVRRILKQLVA.

NADP(+) contacts are provided by residues 10-13 (RGMV), 37-38 (TS), and Gln-74. Arg-103 serves as a coordination point for phosphate. The Acyl-thioester intermediate role is filled by Cys-136. Substrate is bound at residue Gln-163. Ser-166 is an NADP(+) binding site. Glu-243 provides a ligand contact to substrate. Lys-246 contributes to the phosphate binding site. Residue Arg-270 participates in substrate binding. His-277 functions as the Proton acceptor in the catalytic mechanism. Gln-353 lines the NADP(+) pocket.

This sequence belongs to the aspartate-semialdehyde dehydrogenase family. Homodimer.

The enzyme catalyses L-aspartate 4-semialdehyde + phosphate + NADP(+) = 4-phospho-L-aspartate + NADPH + H(+). It functions in the pathway amino-acid biosynthesis; L-lysine biosynthesis via DAP pathway; (S)-tetrahydrodipicolinate from L-aspartate: step 2/4. It participates in amino-acid biosynthesis; L-methionine biosynthesis via de novo pathway; L-homoserine from L-aspartate: step 2/3. Its pathway is amino-acid biosynthesis; L-threonine biosynthesis; L-threonine from L-aspartate: step 2/5. Functionally, catalyzes the NADPH-dependent formation of L-aspartate-semialdehyde (L-ASA) by the reductive dephosphorylation of L-aspartyl-4-phosphate. In Haemophilus influenzae (strain ATCC 51907 / DSM 11121 / KW20 / Rd), this protein is Aspartate-semialdehyde dehydrogenase.